The primary structure comprises 63 residues: Anionic peptide NDBP7 (63 aa).

The N-terminal stretch at 1 to 20 is a signal peptide; the sequence is MISRFCLLFLLVFVVSKIQA.

Belongs to the non-disulfide-bridged peptide (NDBP) superfamily. Long chain multifunctional peptide (group 2) family. In terms of tissue distribution, expressed by the venom gland.

It localises to the secreted. The protein is Anionic peptide NDBP7 of Lychas mucronatus (Chinese swimming scorpion).